Here is a 602-residue protein sequence, read N- to C-terminus: MTAVPVSQIRNFSIIAHIDHGKSTLADRLLQVTGTVSDRNMTAQYLDNMDLERERGITIKLQAARMEYVADDGEKYILNLIDTPGHVDFTYEVSRSLAACEGALLVVDASQGVEAQTLANVYLAIENNLEIIPVLNKIDLPGAEPERVLDEIEEIIGLERTGAIRASAKEGIGIHDILEAIVHRIPPPADTVAEPLQALIFDSYYDAYRGVIVYFRVMSGSVKKGNKIRFMASGKEFEIDEIGVLKPFQVPVDELHAGEVGYIAAAIKLVQDARVGDTITLVSNPAATPLPGYQEAMPVVFCGLYPTDSDQFEDLREALDKLSLNDAALHFEPESSGALGFGFRCGFLGLLHMEVVQERLEREYDLDLVTTAPSVVYRVNKTDGTVLEVQNPADLPPSQLRTSIEEPYVKVELITPQEFVGTLMELSQGRRGIFKDMRYLTPTRTTLIYEIPLAEVITDFFDQMKSRSRGYASMEYQLIGFREGNLVRLDIVLNGEPVDSLSCITHADKAPEVGRQLTAKLKELIPRQQFQVPIQAAIGSKVVARENIAPLRKNVLAKCYGGDISRKKKLLEKQKKGKKRMKSIGSVDVPQEAFMAVLKLEG.

The 183-residue stretch at 7–189 folds into the tr-type G domain; that stretch reads SQIRNFSIIA…AIVHRIPPPA (183 aa). Residues 19–24 and 136–139 contribute to the GTP site; these read DHGKST and NKID.

This sequence belongs to the TRAFAC class translation factor GTPase superfamily. Classic translation factor GTPase family. LepA subfamily.

It is found in the cell inner membrane. It catalyses the reaction GTP + H2O = GDP + phosphate + H(+). Required for accurate and efficient protein synthesis under certain stress conditions. May act as a fidelity factor of the translation reaction, by catalyzing a one-codon backward translocation of tRNAs on improperly translocated ribosomes. Back-translocation proceeds from a post-translocation (POST) complex to a pre-translocation (PRE) complex, thus giving elongation factor G a second chance to translocate the tRNAs correctly. Binds to ribosomes in a GTP-dependent manner. The protein is Elongation factor 4 of Gloeobacter violaceus (strain ATCC 29082 / PCC 7421).